The primary structure comprises 654 residues: Pentatricopeptide repeat-containing protein At3g16610 (654 aa).

PPR repeat units lie at residues 1-32, 34-64, 67-101, 102-136, 137-171, 172-203, 204-238, 239-269, 270-304, 307-341, 342-372, 373-407, 408-442, 443-473, 474-508, 509-543, and 546-576; these read MFLS…SLTL, SSTV…IPHP, NPIA…GVRP, TKYT…DFAT, DMYV…DMVA, WNAM…GLSP, NLST…GFSN, DLVV…DFKK, NEVT…DNVA, TPVA…GFIL, DLTV…IGLK, DVIS…GIRP, DITT…GYAV, NTSI…MHKR, DIVS…GVNP, DEVT…DFNV, and RIDH…MPFE. The segment at 581–654 is type E motif; degenerate; sequence VLGTLLSACW…KTPGYSWVDV (74 aa).

The protein belongs to the PPR family. PCMP-E subfamily.

The chain is Pentatricopeptide repeat-containing protein At3g16610 (PCMP-E91) from Arabidopsis thaliana (Mouse-ear cress).